The sequence spans 252 residues: Ribosomal RNA small subunit methyltransferase NEP1 (252 aa).

S-adenosyl-L-methionine-binding positions include Leu-180, Gly-207, 212–214 (GKD), and 227–232 (LSNYPL).

The protein belongs to the class IV-like SAM-binding methyltransferase superfamily. RNA methyltransferase NEP1 family. As to quaternary structure, homodimer. Interacts with snoRNA U3. Interacts with NOP14 and MPP10. Component of the ribosomal small subunit (SSU) processome composed of at least 40 protein subunits and snoRNA U3.

The protein resides in the nucleus. The protein localises to the nucleolus. It carries out the reaction pseudouridine(1191) in yeast 18S rRNA + S-adenosyl-L-methionine = N(1)-methylpseudouridine(1191) in yeast 18S rRNA + S-adenosyl-L-homocysteine + H(+). In terms of biological role, S-adenosyl-L-methionine-dependent pseudouridine N(1)-methyltransferase that methylates pseudouridine at position 1189 (Psi1189) in 18S rRNA. Involved the biosynthesis of the hypermodified N1-methyl-N3-(3-amino-3-carboxypropyl) pseudouridine (m1acp3-Psi) conserved in eukaryotic 18S rRNA. N1-methylation is independent on acp-modification at the N3-position of U1191. Also has an essential role in 40S ribosomal subunit biogenesis independent on its methyltransferase activity, facilitating the incorporation of ribosomal protein S19 (RPS19A/RPS19B) during the formation of pre-ribosomes. This Saccharomyces cerevisiae (strain ATCC 204508 / S288c) (Baker's yeast) protein is Ribosomal RNA small subunit methyltransferase NEP1.